The primary structure comprises 212 residues: Pyrrolidone-carboxylate peptidase (212 aa).

Catalysis depends on residues glutamate 78, cysteine 141, and histidine 165.

This sequence belongs to the peptidase C15 family. Homotetramer.

The protein resides in the cytoplasm. The catalysed reaction is Release of an N-terminal pyroglutamyl group from a polypeptide, the second amino acid generally not being Pro.. Its function is as follows. Removes 5-oxoproline from various penultimate amino acid residues except L-proline. The polypeptide is Pyrrolidone-carboxylate peptidase (Staphylococcus aureus (strain Mu3 / ATCC 700698)).